A 561-amino-acid polypeptide reads, in one-letter code: Transmembrane protein 209 (561 aa).

2 positions are modified to phosphoserine: Ser-9 and Ser-11. Residues 28–48 (VVLAWGLLNVSMAGMIYTEMT) form a helical membrane-spanning segment. N-linked (GlcNAc...) asparagine glycosylation is present at Asn-57. Residues 60-80 (YWPLWYIELALASLFSLNALF) form a helical membrane-spanning segment. Position 98 is a phosphoserine (Ser-98). Disordered regions lie at residues 119–157 (DLAATQIPPAPPSPSIQGQSVLSYSPSRSPSTSPKFTTS) and 195–234 (FSPSPPSPYPTTVGPVESSGLRSRYRSSPTVYNSPTDKED). A compositionally biased stretch (low complexity) spans 133–157 (SIQGQSVLSYSPSRSPSTSPKFTTS). 3 positions are modified to phosphoserine: Ser-201, Ser-222, and Ser-248. The span at 220 to 229 (RSSPTVYNSP) shows a compositional bias: polar residues. The tract at residues 250-271 (EEKQHRVKLGSPDSTSPSSSPT) is disordered. The segment covering 260 to 271 (SPDSTSPSSSPT) has biased composition (low complexity). A glycan (N-linked (GlcNAc...) asparagine) is linked at Asn-274. The residue at position 278 (Ser-278) is a Phosphoserine.

As to quaternary structure, interacts with NUP205. In terms of tissue distribution, expressed in the testis.

It is found in the membrane. The protein resides in the nucleus envelope. The protein localises to the golgi apparatus. Its subcellular location is the cytoplasm. Nuclear envelope protein which in association with NUP205, may be involved in nuclear transport of various nuclear proteins in addition to MYC. The chain is Transmembrane protein 209 (TMEM209) from Homo sapiens (Human).